A 194-amino-acid polypeptide reads, in one-letter code: tRNA (pseudouridine(54)-N(1))-methyltransferase (194 aa).

Position 125 (leucine 125) interacts with S-adenosyl-L-methionine.

Belongs to the methyltransferase superfamily. TrmY family. As to quaternary structure, homodimer.

It localises to the cytoplasm. The enzyme catalyses pseudouridine(54) in tRNA + S-adenosyl-L-methionine = N(1)-methylpseudouridine(54) in tRNA + S-adenosyl-L-homocysteine + H(+). Its function is as follows. Specifically catalyzes the N1-methylation of pseudouridine at position 54 (Psi54) in tRNAs. The sequence is that of tRNA (pseudouridine(54)-N(1))-methyltransferase from Methanospirillum hungatei JF-1 (strain ATCC 27890 / DSM 864 / NBRC 100397 / JF-1).